The primary structure comprises 602 residues: Probable translation initiation factor IF-2 (602 aa).

Residues 15–230 (LRTPIVAVLG…VLMGLSQRYL (216 aa)) form the tr-type G domain. Positions 24 to 31 (GHVDHGKT) are G1. 24-31 (GHVDHGKT) contacts GTP. The segment at 49-53 (AITQH) is G2. Residues 86 to 89 (DTPG) are G3. Residues 86–90 (DTPGH) and 140–143 (NKID) contribute to the GTP site. The G4 stretch occupies residues 140 to 143 (NKID). The tract at residues 208–210 (SAE) is G5.

It belongs to the TRAFAC class translation factor GTPase superfamily. Classic translation factor GTPase family. IF-2 subfamily.

Functionally, function in general translation initiation by promoting the binding of the formylmethionine-tRNA to ribosomes. Seems to function along with eIF-2. This is Probable translation initiation factor IF-2 from Natronomonas pharaonis (strain ATCC 35678 / DSM 2160 / CIP 103997 / JCM 8858 / NBRC 14720 / NCIMB 2260 / Gabara) (Halobacterium pharaonis).